Here is a 536-residue protein sequence, read N- to C-terminus: Nucleolar protein 58 (536 aa).

The residue at position 34 (Thr34) is a Phosphothreonine. Ser109 carries the post-translational modification Phosphoserine. Residue Lys157 forms a Glycyl lysine isopeptide (Lys-Gly) (interchain with G-Cter in SUMO2) linkage. Residues 282-400 (IAPNVTVMVG…LEARLRILED (119 aa)) enclose the Nop domain. Ser304 and Ser351 each carry phosphoserine. Residues Lys353, Lys411, Lys415, Lys422, Lys426, Lys441, Lys444, and Lys465 each participate in a glycyl lysine isopeptide (Lys-Gly) (interchain with G-Cter in SUMO2) cross-link. Over residues 414–427 (AKAEKYEHKSEVKT) the composition is skewed to basic and acidic residues. The interval 414-440 (AKAEKYEHKSEVKTYDPSGDSTLPTCS) is disordered. Residue Lys467 forms a Glycyl lysine isopeptide (Lys-Gly) (interchain with G-Cter in SUMO); alternate linkage. Lys467 is covalently cross-linked (Glycyl lysine isopeptide (Lys-Gly) (interchain with G-Cter in SUMO1); alternate). Residue Lys467 forms a Glycyl lysine isopeptide (Lys-Gly) (interchain with G-Cter in SUMO2); alternate linkage. Residues 470–488 (VEEEMEEEEAEEEQVVEEE) are compositionally biased toward acidic residues. The disordered stretch occupies residues 470–536 (VEEEMEEEEA…KKKKKKDAED (67 aa)). Lys492 is covalently cross-linked (Glycyl lysine isopeptide (Lys-Gly) (interchain with G-Cter in SUMO2)). The segment covering 492-502 (KKKKKKDKKKH) has biased composition (basic residues). A Glycyl lysine isopeptide (Lys-Gly) (interchain with G-Cter in SUMO); alternate cross-link involves residue Lys504. A Glycyl lysine isopeptide (Lys-Gly) (interchain with G-Cter in SUMO2); alternate cross-link involves residue Lys504. A phosphoserine mark is found at Ser509 and Ser521. Residues 524–536 (KKKKKKKKKDAED) show a composition bias toward basic residues.

The protein belongs to the NOP5/NOP56 family. Core component of box C/D small nucleolar ribonucleoprotein (snoRNP) particles; the core proteins SNU13, NOP56, NOP58 and FBL or FBLL1 assemble stepwise onto the snoRNA. Interacts with NOLC1/Nopp140. Interacts with NOPCHAP1, NUFIP1, RUVBL1 and RUVBL2; NOPCHAP1 bridges the association of NOP58 with RUVBL1:RUVBL2 and NUFIP1. Interacts with PIH1D1. Part of the small subunit (SSU) processome, composed of more than 70 proteins and the RNA chaperone small nucleolar RNA (snoRNA) U3. Post-translationally, sumoylation is essential for high-affinity binding to snoRNAs.

The protein localises to the nucleus. Its subcellular location is the nucleolus. It is found in the nucleoplasm. Functionally, required for the biogenesis of box C/D snoRNAs such as U3, U8 and U14 snoRNAs. Part of the small subunit (SSU) processome, first precursor of the small eukaryotic ribosomal subunit. During the assembly of the SSU processome in the nucleolus, many ribosome biogenesis factors, an RNA chaperone and ribosomal proteins associate with the nascent pre-rRNA and work in concert to generate RNA folding, modifications, rearrangements and cleavage as well as targeted degradation of pre-ribosomal RNA by the RNA exosome. Core component of box C/D small nucleolar ribonucleoprotein (snoRNP) complexes that function in methylation of multiple sites on ribosomal RNAs (rRNAs) and messenger RNAs (mRNAs). This is Nucleolar protein 58 (Nop58) from Mus musculus (Mouse).